Consider the following 489-residue polypeptide: Betaine aldehyde dehydrogenase (489 aa).

Positions 26 and 93 each coordinate K(+). Residue 150–152 (GAW) participates in NAD(+) binding. The Charge relay system role is filled by Lys162. 176-179 (KPSE) is an NAD(+) binding site. Val180 is a binding site for K(+). Residue 229 to 232 (GVET) coordinates NAD(+). A K(+)-binding site is contributed by Leu245. Glu251 functions as the Proton acceptor in the catalytic mechanism. Residues Gly253, Cys285, and Glu386 each contribute to the NAD(+) site. Catalysis depends on Cys285, which acts as the Nucleophile. Cys285 is modified (cysteine sulfenic acid (-SOH)). Positions 456 and 459 each coordinate K(+). Glu463 serves as the catalytic Charge relay system.

The protein belongs to the aldehyde dehydrogenase family. As to quaternary structure, dimer of dimers. K(+) serves as cofactor.

It carries out the reaction betaine aldehyde + NAD(+) + H2O = glycine betaine + NADH + 2 H(+). It functions in the pathway amine and polyamine biosynthesis; betaine biosynthesis via choline pathway; betaine from betaine aldehyde: step 1/1. Its function is as follows. Involved in the biosynthesis of the osmoprotectant glycine betaine. Catalyzes the irreversible oxidation of betaine aldehyde to the corresponding acid. The chain is Betaine aldehyde dehydrogenase from Burkholderia ambifaria (strain ATCC BAA-244 / DSM 16087 / CCUG 44356 / LMG 19182 / AMMD) (Burkholderia cepacia (strain AMMD)).